A 107-amino-acid polypeptide reads, in one-letter code: Ribosome-associated factor Y (107 aa).

Positions 85–107 are disordered; the sequence is LNKLQHKSESRRADERLKDSFEN.

Associates mainly with 70S ribosomes.

Functionally, during stationary phase, prevents 70S dimer formation, probably in order to regulate translation efficiency during transition between the exponential and the stationary phases. In addition, during environmental stress such as cold shock or excessive cell density at stationary phase, stabilizes the 70S ribosome against dissociation, inhibits translation initiation and increase translation accuracy. When normal growth conditions are restored, is quickly released from the ribosome. This Haemophilus influenzae (strain ATCC 51907 / DSM 11121 / KW20 / Rd) protein is Ribosome-associated factor Y.